Consider the following 377-residue polypeptide: Queuine tRNA-ribosyltransferase (377 aa).

D94 functions as the Proton acceptor in the catalytic mechanism. Substrate is bound by residues D94–F98, D148, Q191, and G218. Residues G249–D255 are RNA binding. Residue D268 is the Nucleophile of the active site. The RNA binding; important for wobble base 34 recognition stretch occupies residues T273 to R277.

Belongs to the queuine tRNA-ribosyltransferase family. In terms of assembly, homodimer. Within each dimer, one monomer is responsible for RNA recognition and catalysis, while the other monomer binds to the replacement base PreQ1.

It catalyses the reaction 7-aminomethyl-7-carbaguanine + guanosine(34) in tRNA = 7-aminomethyl-7-carbaguanosine(34) in tRNA + guanine. The protein operates within tRNA modification; tRNA-queuosine biosynthesis. Functionally, catalyzes the base-exchange of a guanine (G) residue with the queuine precursor 7-aminomethyl-7-deazaguanine (PreQ1) at position 34 (anticodon wobble position) in tRNAs with GU(N) anticodons (tRNA-Asp, -Asn, -His and -Tyr). Catalysis occurs through a double-displacement mechanism. The nucleophile active site attacks the C1' of nucleotide 34 to detach the guanine base from the RNA, forming a covalent enzyme-RNA intermediate. The proton acceptor active site deprotonates the incoming PreQ1, allowing a nucleophilic attack on the C1' of the ribose to form the product. After dissociation, two additional enzymatic reactions on the tRNA convert PreQ1 to queuine (Q), resulting in the hypermodified nucleoside queuosine (7-(((4,5-cis-dihydroxy-2-cyclopenten-1-yl)amino)methyl)-7-deazaguanosine). This is Queuine tRNA-ribosyltransferase from Brucella melitensis biotype 1 (strain ATCC 23456 / CCUG 17765 / NCTC 10094 / 16M).